Here is a 269-residue protein sequence, read N- to C-terminus: Short-chain dehydrogenase/reductase ABA4 (269 aa).

The NADP(+) site is built by Ile-34, Asp-80, Arg-144, Tyr-174, Lys-178, Ile-207, and Thr-209. The active-site Proton donor is the Tyr-174. Lys-178 functions as the Lowers pKa of active site Tyr in the catalytic mechanism.

This sequence belongs to the short-chain dehydrogenases/reductases (SDR) family.

It functions in the pathway hormone biosynthesis. Short-chain dehydrogenase/reductase involved in the biosynthesis of abscisic acid (ABA), a phytohormone that acts antagonistically toward salicylic acid (SA), jasmonic acid (JA) and ethylene (ETH) signaling, to impede plant defense responses. During pathogen-host interaction, ABA plays a dual role in disease severity by increasing plant susceptibility and accelerating pathogenesis in the fungus itself. The first step of the pathway catalyzes the reaction from farnesyl diphosphate to alpha-ionylideneethane performed by the alpha-ionylideneethane synthase ABA3 via a three-step reaction mechanism involving 2 neutral intermediates, beta-farnesene and allofarnesene. The cytochrome P450 monooxygenase ABA1 might then be involved in the conversion of alpha-ionylideneethane to alpha-ionylideneacetic acid. Alpha-ionylideneacetic acid is further converted to abscisic acid in 2 steps involving the cytochrome P450 monooxygenase ABA2 and the short-chain dehydrogenase/reductase ABA4, via the intermediates 1'-deoxy-ABA or 1',4'-trans-diol-ABA, depending on the order of action of these 2 enzymes. ABA2 is responsible for the hydroxylation of carbon atom C-1' and ABA4 might be involved in the oxidation of the C-4' carbon atom. The sequence is that of Short-chain dehydrogenase/reductase ABA4 (ABA4) from Pyricularia oryzae (strain Y34) (Rice blast fungus).